The primary structure comprises 73 residues: Cell division protein ZapB (73 aa).

Positions 3–66 (LELLSKLETK…SWNEKVTGLV (64 aa)) form a coiled coil.

The protein belongs to the ZapB family. Homodimer. The ends of the coiled-coil dimer bind to each other, forming polymers. Interacts with FtsZ.

Its subcellular location is the cytoplasm. Its function is as follows. Non-essential, abundant cell division factor that is required for proper Z-ring formation. It is recruited early to the divisome by direct interaction with FtsZ, stimulating Z-ring assembly and thereby promoting cell division earlier in the cell cycle. Its recruitment to the Z-ring requires functional FtsA or ZipA. The polypeptide is Cell division protein ZapB (Shewanella baltica (strain OS223)).